The primary structure comprises 1335 residues: Membrane-associated phosphatidylinositol transfer protein 2 (1335 aa).

Disordered regions lie at residues 32 to 51 and 262 to 341; these read ETHGQGSGVEILENRPYTDG and EEGP…SEEE. Over residues 275-286 the composition is skewed to polar residues; the sequence is KDQASGTTSDPG. Over residues 299-319 the composition is skewed to low complexity; that stretch reads KQWSTSSKSSRSSKRGASPSR. A phosphoserine mark is found at Ser334, Ser338, Ser365, and Ser586. The tract at residues 606 to 657 is disordered; that stretch reads HCSGGSGGGGSGGSSLESSRHLSRSNIDIPRSNGTEDSRRQLPRKRSDSSTY. Positions 609–618 are enriched in gly residues; it reads GGSGGGGSGG. At Ser630 the chain carries Phosphoserine. The span at 639 to 653 shows a compositional bias: basic and acidic residues; the sequence is GTEDSRRQLPRKRSD. Ser686, Ser687, and Ser688 each carry phosphoserine. Residues 701 to 949 form the DDHD domain; the sequence is FDFEIADLFL…VSFLLRQVMR (249 aa). Position 814 is an omega-N-methylarginine (Arg814). A disordered region spans residues 861 to 880; sequence ALPPPSPTTQGPRARARQVS. Ser1263 is modified (phosphoserine). The disordered stretch occupies residues 1282–1313; the sequence is TISAQPSGPSHRHDRTQTQMDSEQRGQRSMSV. The segment covering 1298-1313 has biased composition (polar residues); that stretch reads QTQMDSEQRGQRSMSV.

It belongs to the PtdIns transfer protein family. PI transfer class IIA subfamily. In terms of assembly, interacts with CPNE4 (via VWFA domain). Interacts with PTK2B via its C-terminus. As to expression, detected in retina and in the dentate gyrus of the cerebellum.

It localises to the endomembrane system. The protein resides in the cytoplasm. It is found in the cytoskeleton. Its function is as follows. Catalyzes the transfer of phosphatidylinositol and phosphatidylcholine between membranes (in vitro). Binds calcium ions. In Mus musculus (Mouse), this protein is Membrane-associated phosphatidylinositol transfer protein 2 (Pitpnm2).